Consider the following 471-residue polypeptide: Bifunctional protein GlmU (471 aa).

The segment at 1–235 (MVAVAILAAG…YQEIFGINNR (235 aa)) is pyrophosphorylase. UDP-N-acetyl-alpha-D-glucosamine-binding positions include 7-10 (LAAG), Lys21, Gln82, and 87-88 (GT). Asp112 contacts Mg(2+). 4 residues coordinate UDP-N-acetyl-alpha-D-glucosamine: Gly149, Glu164, Asn179, and Asn233. Asn233 lines the Mg(2+) pocket. Positions 236–256 (KHLAKAHEILQVRVKDDWMEA) are linker. Residues 257–471 (GVTLIDPDSI…SKKEENKSSP (215 aa)) form an N-acetyltransferase region. UDP-N-acetyl-alpha-D-glucosamine is bound by residues Arg338 and Lys356. Residue His368 is the Proton acceptor of the active site. UDP-N-acetyl-alpha-D-glucosamine contacts are provided by Tyr371 and Asn382. Acetyl-CoA contacts are provided by residues Ala385, 391 to 392 (NY), Ser410, Ala428, and Arg445.

The protein in the N-terminal section; belongs to the N-acetylglucosamine-1-phosphate uridyltransferase family. This sequence in the C-terminal section; belongs to the transferase hexapeptide repeat family. In terms of assembly, homotrimer. Mg(2+) is required as a cofactor.

The protein resides in the cytoplasm. It catalyses the reaction alpha-D-glucosamine 1-phosphate + acetyl-CoA = N-acetyl-alpha-D-glucosamine 1-phosphate + CoA + H(+). The enzyme catalyses N-acetyl-alpha-D-glucosamine 1-phosphate + UTP + H(+) = UDP-N-acetyl-alpha-D-glucosamine + diphosphate. It participates in nucleotide-sugar biosynthesis; UDP-N-acetyl-alpha-D-glucosamine biosynthesis; N-acetyl-alpha-D-glucosamine 1-phosphate from alpha-D-glucosamine 6-phosphate (route II): step 2/2. Its pathway is nucleotide-sugar biosynthesis; UDP-N-acetyl-alpha-D-glucosamine biosynthesis; UDP-N-acetyl-alpha-D-glucosamine from N-acetyl-alpha-D-glucosamine 1-phosphate: step 1/1. It functions in the pathway bacterial outer membrane biogenesis; LPS lipid A biosynthesis. Its function is as follows. Catalyzes the last two sequential reactions in the de novo biosynthetic pathway for UDP-N-acetylglucosamine (UDP-GlcNAc). The C-terminal domain catalyzes the transfer of acetyl group from acetyl coenzyme A to glucosamine-1-phosphate (GlcN-1-P) to produce N-acetylglucosamine-1-phosphate (GlcNAc-1-P), which is converted into UDP-GlcNAc by the transfer of uridine 5-monophosphate (from uridine 5-triphosphate), a reaction catalyzed by the N-terminal domain. This Trichodesmium erythraeum (strain IMS101) protein is Bifunctional protein GlmU.